Here is a 337-residue protein sequence, read N- to C-terminus: tRNA N6-adenosine threonylcarbamoyltransferase (337 aa).

Positions 111 and 115 each coordinate Fe cation. Residues 134 to 138, Asp-167, Gly-180, and Asn-272 contribute to the substrate site; that span reads LVSGG. Residue Asp-300 coordinates Fe cation.

The protein belongs to the KAE1 / TsaD family. The cofactor is Fe(2+).

It localises to the cytoplasm. It carries out the reaction L-threonylcarbamoyladenylate + adenosine(37) in tRNA = N(6)-L-threonylcarbamoyladenosine(37) in tRNA + AMP + H(+). Required for the formation of a threonylcarbamoyl group on adenosine at position 37 (t(6)A37) in tRNAs that read codons beginning with adenine. Is involved in the transfer of the threonylcarbamoyl moiety of threonylcarbamoyl-AMP (TC-AMP) to the N6 group of A37, together with TsaE and TsaB. TsaD likely plays a direct catalytic role in this reaction. This Klebsiella pneumoniae (strain 342) protein is tRNA N6-adenosine threonylcarbamoyltransferase.